We begin with the raw amino-acid sequence, 319 residues long: Homoserine O-acetyltransferase (319 aa).

The active-site Acyl-thioester intermediate is Cys-142. Substrate contacts are provided by Lys-163 and Ser-192. Catalysis depends on His-235, which acts as the Proton acceptor. Residue Glu-237 is part of the active site. A substrate-binding site is contributed by Arg-249.

Belongs to the MetA family.

Its subcellular location is the cytoplasm. It carries out the reaction L-homoserine + acetyl-CoA = O-acetyl-L-homoserine + CoA. It participates in amino-acid biosynthesis; L-methionine biosynthesis via de novo pathway; O-acetyl-L-homoserine from L-homoserine: step 1/1. Its function is as follows. Transfers an acetyl group from acetyl-CoA to L-homoserine, forming acetyl-L-homoserine. This Lactococcus lactis subsp. cremoris (strain MG1363) protein is Homoserine O-acetyltransferase.